The sequence spans 257 residues: Imidazole glycerol phosphate synthase subunit HisF (257 aa).

Residues aspartate 11 and aspartate 130 contribute to the active site.

This sequence belongs to the HisA/HisF family. As to quaternary structure, heterodimer of HisH and HisF.

The protein resides in the cytoplasm. The catalysed reaction is 5-[(5-phospho-1-deoxy-D-ribulos-1-ylimino)methylamino]-1-(5-phospho-beta-D-ribosyl)imidazole-4-carboxamide + L-glutamine = D-erythro-1-(imidazol-4-yl)glycerol 3-phosphate + 5-amino-1-(5-phospho-beta-D-ribosyl)imidazole-4-carboxamide + L-glutamate + H(+). Its pathway is amino-acid biosynthesis; L-histidine biosynthesis; L-histidine from 5-phospho-alpha-D-ribose 1-diphosphate: step 5/9. In terms of biological role, IGPS catalyzes the conversion of PRFAR and glutamine to IGP, AICAR and glutamate. The HisF subunit catalyzes the cyclization activity that produces IGP and AICAR from PRFAR using the ammonia provided by the HisH subunit. In Proteus mirabilis (strain HI4320), this protein is Imidazole glycerol phosphate synthase subunit HisF.